The sequence spans 118 residues: MARIAGVNIPNNKQIEIALTYIYGIGRTRARTVLSAADIACDMRVKDISEPELERIRSEVAKFLVEGDLRREVTMNIKRLMDLGCYRGIRHRRGLPVHGQRTKTNARTRKGPAKSITR.

The disordered stretch occupies residues 94–118; it reads GLPVHGQRTKTNARTRKGPAKSITR.

The protein belongs to the universal ribosomal protein uS13 family. In terms of assembly, part of the 30S ribosomal subunit. Forms a loose heterodimer with protein S19. Forms two bridges to the 50S subunit in the 70S ribosome.

In terms of biological role, located at the top of the head of the 30S subunit, it contacts several helices of the 16S rRNA. In the 70S ribosome it contacts the 23S rRNA (bridge B1a) and protein L5 of the 50S subunit (bridge B1b), connecting the 2 subunits; these bridges are implicated in subunit movement. Contacts the tRNAs in the A and P-sites. The chain is Small ribosomal subunit protein uS13 from Acidithiobacillus ferrooxidans (strain ATCC 23270 / DSM 14882 / CIP 104768 / NCIMB 8455) (Ferrobacillus ferrooxidans (strain ATCC 23270)).